A 603-amino-acid polypeptide reads, in one-letter code: Palladin (603 aa).

The segment at 63-67 (FPPPP) is interaction with VASP. S133 is modified (phosphoserine). The interval 134 to 156 (PPTPAALLSPTKEPPPLLAKPKL) is disordered. Position 136 is a phosphothreonine (T136). S142, S170, S256, and S261 each carry phosphoserine. Residues 278-362 (PFFEMKLKHY…MAANTQGRVS (85 aa)) enclose the Ig-like C2-type 1 domain. Positions 373-402 (NQRGRSPRSPPGHPHARRPRSRSRDSGDEN) are disordered. 3 positions are modified to phosphoserine: S378, S381, and S393. The residue at position 395 (S395) is a Phosphoserine; by PKB/AKT1. S398 is subject to Phosphoserine. 2 consecutive Ig-like C2-type domains span residues 412 to 503 (PHFL…LVVA) and 511 to 601 (PVFI…ARLD). 2 interaction with EZR regions span residues 414 to 503 (FLQA…LVVA) and 513 to 603 (FIEK…LDVY). Cysteines 433 and 485 form a disulfide.

It belongs to the myotilin/palladin family. In terms of assembly, interacts with EPS8. Interacts with LASP1. Interacts with VASP. Interacts with ACTN. Interacts with SORBS2. Interacts with PFN1. Interacts with LPP. Interacts with SPIN90. Interacts with SRC. Interacts with EZR. Interacts with RAI14. In terms of processing, phosphorylated predominantly on serines and, to a lesser extent, on tyrosines. Phosphorylation at Ser-395 by PKB/AKT1 modulates cytoskeletal organization and cell motility. In adult central nervous system is detected in the brain and spinal cord, specially in the olfactory bulb, cerebral and cerebellar cortices, hippocampus, amygdala, superior colluculus, and superficial laminae of the spinal dorsal horn.

It localises to the cytoplasm. It is found in the cytoskeleton. Its subcellular location is the cell junction. The protein resides in the focal adhesion. The protein localises to the myofibril. It localises to the sarcomere. It is found in the z line. Its subcellular location is the cell projection. The protein resides in the ruffle. The protein localises to the podosome. It localises to the lamellipodium. It is found in the axon. Its subcellular location is the growth cone. Cytoskeletal protein required for organization of normal actin cytoskeleton. Roles in establishing cell morphology, motility, cell adhesion and cell-extracellular matrix interactions in a variety of cell types. May function as a scaffolding molecule with the potential to influence both actin polymerization and the assembly of existing actin filaments into higher-order arrays. Binds to proteins that bind to either monomeric or filamentous actin. Localizes at sites where active actin remodeling takes place, such as lamellipodia and membrane ruffles. Different isoforms may have functional differences. Plays a role in neurite outgrowth and in the establishment of polarity during neuronal morphogenesis. Participates in the acquisition of the reactive astrocyte morphology. The polypeptide is Palladin (Palld) (Rattus norvegicus (Rat)).